A 980-amino-acid chain; its full sequence is Valine--tRNA ligase (980 aa).

The tract at residues 1 to 40 is disordered; it reads MADKGCEAAQSKDSSAPGSGEPRPKTEKELERERQKAAKL. The segment covering 22-40 has biased composition (basic and acidic residues); sequence PRPKTEKELERERQKAAKL. Positions 139-149 match the 'HIGH' region motif; that stretch reads PNVTGALHIGH. The short motif at 652–656 is the 'KMSKS' region element; it reads KMSKS. Position 655 (Lys-655) interacts with ATP.

The protein belongs to the class-I aminoacyl-tRNA synthetase family.

Its subcellular location is the cytoplasm. It catalyses the reaction tRNA(Val) + L-valine + ATP = L-valyl-tRNA(Val) + AMP + diphosphate. The polypeptide is Valine--tRNA ligase (vas2) (Schizosaccharomyces pombe (strain 972 / ATCC 24843) (Fission yeast)).